Consider the following 304-residue polypeptide: UTP--glucose-1-phosphate uridylyltransferase 1 (304 aa).

The protein belongs to the UDPGP type 2 family.

It carries out the reaction alpha-D-glucose 1-phosphate + UTP + H(+) = UDP-alpha-D-glucose + diphosphate. It participates in carbohydrate metabolism; nucleotide-sugar metabolism. This Streptococcus pyogenes serotype M3 (strain ATCC BAA-595 / MGAS315) protein is UTP--glucose-1-phosphate uridylyltransferase 1 (hasC1).